A 463-amino-acid chain; its full sequence is MTTETRSLYSQLPAIDRLLRDSSFLSLRDTYGHTRVVELLRQMLDEAREVIRDSQTLPAWCENWAQEVDARLTKEAQSALRPVINLTGTVLHTNLGRALQAEAAVEAVTKAMRSPVTLEYDLDDAGRGHRDRALAQLLCRITGAEDACIVNNNAAAVLLMLAATASGKEVVVSRGELVEIGGAFRIPDVMRQAGCTLHEVGTTNRTHANDYRQAVNENTALLMKVHTSNYSIQGFTKAIDEAELVALGKELDVPVVTDLGSGSLVDLSQYGLPKEPMPQELIAAGVSLVSFSGDKLLGGPQAGIIVGKKEMIARLQSHPLKRALRADKMTLAALEATLRLYLHPEALSEKLPTLRLLTRSAEVIQIQAQRLQAPLAAHYGAEFAVQVMPCLSQIGSGSLPVDRLPSAALTFTPHDGRGSHLESLAARWRELPVPVIGRIYDGRLWLDLRCLEDEQRFLEMLLK.

Lys-295 carries the N6-(pyridoxal phosphate)lysine modification.

It belongs to the SelA family. Homodecamer; pentamer of dimers. Binds only one seryl-tRNA(Sec) per dimer. The cofactor is pyridoxal 5'-phosphate.

It is found in the cytoplasm. The enzyme catalyses L-seryl-tRNA(Sec) + selenophosphate + H(+) = L-selenocysteinyl-tRNA(Sec) + phosphate. It participates in aminoacyl-tRNA biosynthesis; selenocysteinyl-tRNA(Sec) biosynthesis; selenocysteinyl-tRNA(Sec) from L-seryl-tRNA(Sec) (bacterial route): step 1/1. Converts seryl-tRNA(Sec) to selenocysteinyl-tRNA(Sec) required for selenoprotein biosynthesis. The polypeptide is L-seryl-tRNA(Sec) selenium transferase (Escherichia coli O6:H1 (strain CFT073 / ATCC 700928 / UPEC)).